Here is a 521-residue protein sequence, read N- to C-terminus: Non-specific phospholipase C5 (521 aa).

Positions 478–487 are enriched in basic and acidic residues; the sequence is SKKARERGGD. Positions 478–521 are disordered; that stretch reads SKKARERGGDENDIVFCVDDDDDHNVVKPPPSQSEPSHATPWSN. Positions 511-521 are enriched in polar residues; it reads SEPSHATPWSN.

This sequence belongs to the bacterial phospholipase C family. Specifically expressed in flowers.

The protein localises to the cytoplasm. It localises to the cytosol. It catalyses the reaction a 1,2-diacyl-sn-glycero-3-phosphocholine + H2O = phosphocholine + a 1,2-diacyl-sn-glycerol + H(+). Non-specific phospholipase C (PLC) which assumes minor PLC activity during inorganic phosphate starvation. Can hydrolyze both phosphatidylcholine (PC) and phosphatidylethanolamine (PE). Required for normal accumulation of digalactosyldiacylglycerol (DGDG) during phosphate limitation and may contribute to the conversion of phospholipids to diacylglycerol, the substrate for galactolipid synthesis. The sequence is that of Non-specific phospholipase C5 (NPC5) from Arabidopsis thaliana (Mouse-ear cress).